Here is a 181-residue protein sequence, read N- to C-terminus: ATP synthase subunit b, chloroplastic (181 aa).

A helical membrane pass occupies residues 27-49; it reads LATNPINLSVVLGVVIYFGKGVL.

It belongs to the ATPase B chain family. In terms of assembly, F-type ATPases have 2 components, F(1) - the catalytic core - and F(0) - the membrane proton channel. F(1) has five subunits: alpha(3), beta(3), gamma(1), delta(1), epsilon(1). F(0) has four main subunits: a(1), b(1), b'(1) and c(10-14). The alpha and beta chains form an alternating ring which encloses part of the gamma chain. F(1) is attached to F(0) by a central stalk formed by the gamma and epsilon chains, while a peripheral stalk is formed by the delta, b and b' chains.

The protein resides in the plastid. It localises to the chloroplast thylakoid membrane. In terms of biological role, f(1)F(0) ATP synthase produces ATP from ADP in the presence of a proton or sodium gradient. F-type ATPases consist of two structural domains, F(1) containing the extramembraneous catalytic core and F(0) containing the membrane proton channel, linked together by a central stalk and a peripheral stalk. During catalysis, ATP synthesis in the catalytic domain of F(1) is coupled via a rotary mechanism of the central stalk subunits to proton translocation. Its function is as follows. Component of the F(0) channel, it forms part of the peripheral stalk, linking F(1) to F(0). This is ATP synthase subunit b, chloroplastic from Lemna minor (Common duckweed).